The sequence spans 101 residues: Citrinin resistance protein, mitochondrial (101 aa).

Its subcellular location is the mitochondrion. Mitochondrial protein that is involved in citrinin resistance. The polypeptide is Citrinin resistance protein, mitochondrial (Saccharomyces cerevisiae (strain ATCC 204508 / S288c) (Baker's yeast)).